The chain runs to 309 residues: Ribosomal protein L11 methyltransferase (309 aa).

Residues T144, G165, D187, and N235 each contribute to the S-adenosyl-L-methionine site.

It belongs to the methyltransferase superfamily. PrmA family.

The protein resides in the cytoplasm. The catalysed reaction is L-lysyl-[protein] + 3 S-adenosyl-L-methionine = N(6),N(6),N(6)-trimethyl-L-lysyl-[protein] + 3 S-adenosyl-L-homocysteine + 3 H(+). Its function is as follows. Methylates ribosomal protein L11. In Prochlorococcus marinus (strain MIT 9215), this protein is Ribosomal protein L11 methyltransferase.